The sequence spans 547 residues: MYRLMSAVTARAAAPGGLASSCGRRGVHQRAGLPPLGHGWVGGLGLGLGLALGVKLAGGLRGAAPAQSPAAPDPEASPLAEPPQEQSLAPWSPQTPAPPCSRCFARAIESSRDLLHRIKDEVGAPGIVVGVSVDGKEVWSEGLGYADVENRVPCKPETVMRIASISKSLTMVALAKLWEAGKLDLDIPVQHYVPEFPEKEYEGEKVSVTTRLLISHLSGIRHYEKDIKKVKEEKAYKALKMMKENVAFEQEKEGKSNEKNDFTKFKTEQENEAKCRNSKPGKKKNDFEQGELYLREKFENSIESLRLFKNDPLFFKPGSQFLYSTFGYTLLAAIVERASGCKYLDYMQKIFHDLDMLTTVQEENEPVIYNRARFYVYNKKKRLVNTPYVDNSYKWAGGGFLSTVGDLLKFGNAMLYGYQVGLFKNSNENLLPGYLKPETMVMMWTPVPNTEMSWDKEGKYAMAWGVVERKQTYGSCRKQRHYASHTGGAVGASSVLLVLPEELDTETINNKVPPRGIIVSIICNMQSVGLNSTALKIALEFDKDRSD.

Residues 1–115 constitute a mitochondrion transit peptide; that stretch reads MYRLMSAVTA…RAIESSRDLL (115 aa). Residues 62–83 are compositionally biased toward low complexity; the sequence is GAAPAQSPAAPDPEASPLAEPP. The interval 62 to 96 is disordered; it reads GAAPAQSPAAPDPEASPLAEPPQEQSLAPWSPQTP. Serine 164 (acyl-ester intermediate) is an active-site residue. An N6-succinyllysine mark is found at lysine 283 and lysine 284. N6-acetyllysine occurs at positions 297 and 342.

Belongs to the peptidase S12 family. As to expression, expressed predominantly in skeletal muscle.

It is found in the mitochondrion. Its function is as follows. Mitochondrial serine protease that acts as a regulator of mitochondrial lipid metabolism. Acts by decreasing protein levels of PISD, a mitochondrial enzyme that converts phosphatidylserine (PtdSer) to phosphatidylethanolamine (PtdEtn), thereby affecting mitochondrial lipid metabolism. It is unclear whether it acts directly by mediating proteolysis of PISD or by mediating proteolysis of another lipid metabolism protein. Acts as a tumor suppressor that has the ability to inhibit proliferation of multiple types of breast cancer cells: probably by promoting decreased levels of PISD, thereby affecting mitochondrial lipid metabolism. In Homo sapiens (Human), this protein is Serine beta-lactamase-like protein LACTB, mitochondrial.